Here is a 641-residue protein sequence, read N- to C-terminus: Threonine--tRNA ligase (641 aa).

Positions 1 to 61 (MPVITLPDGS…ENDTELAIVT (61 aa)) constitute a TGS domain. The catalytic stretch occupies residues 242–533 (DHRKIGKKLG…LIEEYEGAFP (292 aa)). Positions 333, 384, and 510 each coordinate Zn(2+).

The protein belongs to the class-II aminoacyl-tRNA synthetase family. Homodimer. Zn(2+) is required as a cofactor.

The protein resides in the cytoplasm. It carries out the reaction tRNA(Thr) + L-threonine + ATP = L-threonyl-tRNA(Thr) + AMP + diphosphate + H(+). Catalyzes the attachment of threonine to tRNA(Thr) in a two-step reaction: L-threonine is first activated by ATP to form Thr-AMP and then transferred to the acceptor end of tRNA(Thr). Also edits incorrectly charged L-seryl-tRNA(Thr). The sequence is that of Threonine--tRNA ligase from Marinobacter nauticus (strain ATCC 700491 / DSM 11845 / VT8) (Marinobacter aquaeolei).